The chain runs to 266 residues: DNA repair protein RecO (266 aa).

Belongs to the RecO family.

Involved in DNA repair and RecF pathway recombination. This Synechococcus elongatus (strain ATCC 33912 / PCC 7942 / FACHB-805) (Anacystis nidulans R2) protein is DNA repair protein RecO.